Consider the following 411-residue polypeptide: Imidazolonepropionase (411 aa).

Positions 75 and 77 each coordinate Fe(3+). 2 residues coordinate Zn(2+): H75 and H77. 4-imidazolone-5-propanoate-binding residues include R84, Y147, and H180. Residue Y147 coordinates N-formimidoyl-L-glutamate. H245 is a Fe(3+) binding site. H245 is a binding site for Zn(2+). Position 248 (Q248) interacts with 4-imidazolone-5-propanoate. D320 contributes to the Fe(3+) binding site. Residue D320 participates in Zn(2+) binding. N-formimidoyl-L-glutamate is bound by residues N322 and G324. Residue T325 coordinates 4-imidazolone-5-propanoate.

This sequence belongs to the metallo-dependent hydrolases superfamily. HutI family. The cofactor is Zn(2+). Requires Fe(3+) as cofactor.

The protein resides in the cytoplasm. It carries out the reaction 4-imidazolone-5-propanoate + H2O = N-formimidoyl-L-glutamate. Its pathway is amino-acid degradation; L-histidine degradation into L-glutamate; N-formimidoyl-L-glutamate from L-histidine: step 3/3. Functionally, catalyzes the hydrolytic cleavage of the carbon-nitrogen bond in imidazolone-5-propanoate to yield N-formimidoyl-L-glutamate. It is the third step in the universal histidine degradation pathway. The chain is Imidazolonepropionase from Aeromonas hydrophila subsp. hydrophila (strain ATCC 7966 / DSM 30187 / BCRC 13018 / CCUG 14551 / JCM 1027 / KCTC 2358 / NCIMB 9240 / NCTC 8049).